We begin with the raw amino-acid sequence, 186 residues long: Orotate phosphoribosyltransferase (186 aa).

Residues R93, K94, K97, H99, and 119 to 127 (EDVTTTGGS) each bind 5-phospho-alpha-D-ribose 1-diphosphate. Orotate-binding residues include T123 and R151.

It belongs to the purine/pyrimidine phosphoribosyltransferase family. PyrE subfamily. As to quaternary structure, homodimer. The cofactor is Mg(2+).

It carries out the reaction orotidine 5'-phosphate + diphosphate = orotate + 5-phospho-alpha-D-ribose 1-diphosphate. The protein operates within pyrimidine metabolism; UMP biosynthesis via de novo pathway; UMP from orotate: step 1/2. Functionally, catalyzes the transfer of a ribosyl phosphate group from 5-phosphoribose 1-diphosphate to orotate, leading to the formation of orotidine monophosphate (OMP). The protein is Orotate phosphoribosyltransferase of Pyrococcus horikoshii (strain ATCC 700860 / DSM 12428 / JCM 9974 / NBRC 100139 / OT-3).